An 875-amino-acid polypeptide reads, in one-letter code: Alanine--tRNA ligase (875 aa).

Zn(2+) is bound by residues H565, H569, C666, and H670.

The protein belongs to the class-II aminoacyl-tRNA synthetase family. Zn(2+) is required as a cofactor.

It is found in the cytoplasm. The enzyme catalyses tRNA(Ala) + L-alanine + ATP = L-alanyl-tRNA(Ala) + AMP + diphosphate. Its function is as follows. Catalyzes the attachment of alanine to tRNA(Ala) in a two-step reaction: alanine is first activated by ATP to form Ala-AMP and then transferred to the acceptor end of tRNA(Ala). Also edits incorrectly charged Ser-tRNA(Ala) and Gly-tRNA(Ala) via its editing domain. In Leptothrix cholodnii (strain ATCC 51168 / LMG 8142 / SP-6) (Leptothrix discophora (strain SP-6)), this protein is Alanine--tRNA ligase.